Here is a 615-residue protein sequence, read N- to C-terminus: Medium-chain acyl-CoA ligase ACSF2, mitochondrial (615 aa).

Residues 1–41 constitute a mitochondrion transit peptide; sequence MAVYVGMLRLGRLCAGSSGVLGARAALSRSWQEARLQGVRF. Position 179 is an N6-acetyllysine (lysine 179). The residue at position 182 (lysine 182) is an N6-acetyllysine; alternate. Lysine 182 carries the post-translational modification N6-succinyllysine; alternate. An ATP-binding site is contributed by 263–271; sequence TSGTTGSPK. An N6-acetyllysine mark is found at lysine 340 and lysine 398. Lysine 478 carries the post-translational modification N6-succinyllysine. ATP-binding residues include aspartate 493 and arginine 508. Residue lysine 510 is modified to N6-acetyllysine. Lysine 544 and lysine 570 each carry N6-acetyllysine; alternate. Residues lysine 544 and lysine 570 each carry the N6-succinyllysine; alternate modification. Lysine 599 serves as a coordination point for ATP. Residue lysine 599 is modified to N6-succinyllysine.

The protein belongs to the ATP-dependent AMP-binding enzyme family.

Its subcellular location is the mitochondrion. The catalysed reaction is a medium-chain fatty acid + ATP + CoA = a medium-chain fatty acyl-CoA + AMP + diphosphate. It carries out the reaction octanoate + ATP + CoA = octanoyl-CoA + AMP + diphosphate. Its function is as follows. Acyl-CoA synthases catalyze the initial reaction in fatty acid metabolism, by forming a thioester with CoA. Has some preference toward medium-chain substrates. Plays a role in adipocyte differentiation. This chain is Medium-chain acyl-CoA ligase ACSF2, mitochondrial, found in Homo sapiens (Human).